The following is a 276-amino-acid chain: Pantothenate synthetase (276 aa).

Position 27–34 (27–34) interacts with ATP; that stretch reads MGALHRGH. His-34 acts as the Proton donor in catalysis. Residue Gln-58 coordinates (R)-pantoate. Residue Gln-58 participates in beta-alanine binding. Position 147-150 (147-150) interacts with ATP; it reads GKKD. Residue Gln-153 participates in (R)-pantoate binding. ATP-binding positions include Val-176 and 184–187; that span reads LSSR.

The protein belongs to the pantothenate synthetase family. In terms of assembly, homodimer.

It localises to the cytoplasm. The catalysed reaction is (R)-pantoate + beta-alanine + ATP = (R)-pantothenate + AMP + diphosphate + H(+). It functions in the pathway cofactor biosynthesis; (R)-pantothenate biosynthesis; (R)-pantothenate from (R)-pantoate and beta-alanine: step 1/1. Functionally, catalyzes the condensation of pantoate with beta-alanine in an ATP-dependent reaction via a pantoyl-adenylate intermediate. The polypeptide is Pantothenate synthetase (Helicobacter pylori (strain J99 / ATCC 700824) (Campylobacter pylori J99)).